The following is a 459-amino-acid chain: Elongation factor 1-alpha (459 aa).

G2 is subject to N,N,N-trimethylglycine. At K3 the chain carries N6,N6-dimethyllysine; alternate. At K3 the chain carries N6-methyllysine; alternate. The tr-type G domain maps to 5–240 (KTHVNVVVIG…DAVDPPTRPS (236 aa)). Residues 14 to 21 (GHVDSGKS) form a G1 region. GTP is bound at residue 14–21 (GHVDSGKS). Position 30 is an N6-methyllysine (K30). The segment at 70 to 74 (VITID) is G2. The residue at position 79 (K79) is an N6,N6,N6-trimethyllysine. A G3 region spans residues 91-94 (DAPG). GTP is bound by residues 91–95 (DAPGH) and 153–156 (NKMD). Positions 153–156 (NKMD) are G4. Residues 192–194 (SGW) are G5. Position 316 is an N6,N6-dimethyllysine; alternate (K316). Residue K316 is modified to N6-methyllysine; alternate. At K390 the chain carries N6-methyllysine.

This sequence belongs to the TRAFAC class translation factor GTPase superfamily. Classic translation factor GTPase family. EF-Tu/EF-1A subfamily.

It is found in the cytoplasm. In terms of biological role, this protein promotes the GTP-dependent binding of aminoacyl-tRNA to the A-site of ribosomes during protein biosynthesis. The chain is Elongation factor 1-alpha (TEF) from Blastobotrys adeninivorans (Yeast).